Here is a 553-residue protein sequence, read N- to C-terminus: Putative transport protein YidE (553 aa).

Helical transmembrane passes span Ile4–Ile24, Gly28–Asp48, Phe65–Ser85, Leu95–Phe115, and Met158–Met178. RCK C-terminal domains are found at residues Lys192 to Lys276 and Asp279 to Asn361. Helical transmembrane passes span Met371–Val391, Gly393–Leu413, Leu437–Thr457, Leu464–Leu484, Tyr493–Ala513, and Leu533–Gly553.

The protein belongs to the AAE transporter (TC 2.A.81) family. YidE subfamily.

It localises to the cell membrane. The polypeptide is Putative transport protein YidE (Salmonella newport (strain SL254)).